The sequence spans 4814 residues: Nonribosomal peptide synthetase SIDC (4814 aa).

Positions 21–453 (PGPTLLHQLV…MKTSGCHGAA (433 aa)) are adenylation 1. Positions 528 to 601 (DLKKSTEPEL…HLVSSIKIID (74 aa)) constitute a Carrier 1 domain. Position 562 is an O-(pantetheine 4'-phosphoryl)serine (S562). The tract at residues 637 to 1045 (VQDIIPCTNL…SLLESMRSME (409 aa)) is condensation 1. The adenylation 2 stretch occupies residues 1101–1488 (TYTDLNRNAN…SRVSSATAAV (388 aa)). Carrier domains follow at residues 1589–1666 (EDWN…HSSH) and 2134–2210 (SSWT…FENG). An O-(pantetheine 4'-phosphoryl)serine mark is found at S1626 and S2171. 2 condensation regions span residues 1706–2210 (LQEA…FENG) and 2243–2649 (LPCT…HQHD). An adenylation 3 region spans residues 2709 to 3100 (TFAQLNSIGN…IRSVKNIHDV (392 aa)). One can recognise a Carrier 4 domain in the interval 3203–3280 (SKDSAGYQKL…DLAVALSTAS (78 aa)). S3240 carries the post-translational modification O-(pantetheine 4'-phosphoryl)serine. The interval 3319 to 3732 (YIYPCSPLQQ…VQVETALVDA (414 aa)) is condensation 4. In terms of domain architecture, Carrier 5 spans 3747–3823 (EVWGPAADVL…YLSSLVMRLT (77 aa)). Residue S3784 is modified to O-(pantetheine 4'-phosphoryl)serine. Residues 3857-4258 (DILPTTPLQD…YVLRHAEEDV (402 aa)) form a condensation 5 region. In terms of domain architecture, Carrier 6 spans 4295–4368 (NATSLAIRKV…HMAEQVAALG (74 aa)). S4329 bears the O-(pantetheine 4'-phosphoryl)serine mark. The interval 4504–4686 (ETLLRLRIHH…HEDMQKITAD (183 aa)) is condensation 6.

This sequence belongs to the NRP synthetase family. Pantetheine 4'-phosphate serves as cofactor.

It functions in the pathway siderophore biosynthesis. Its function is as follows. Nonribosomal peptide synthetase; part of the gene cluster that mediates the biosynthesis of at least 11 siderophores, including beauverichelin A, dimerumic acid (DA), Na-dimethyl coprogen (NADC), eleutherazine B, ferricrocin (FC), fusarinine A, fusarinine C (FsC), metachelin A, mevalonolactone, rhodotorulic acid (RA) and tenellin. This cocktail of siderophores for iron metabolism is essential for virulence, and more specifically for the fungal virulence in penetrating through the host cuticle. Siderophore synthesis is also involved in conidial germination under iron-deficient conditions. SIDC catalyzes the assembly of ferricrocin whereas SIDD catalyzes the assembly of fusarinine C. In Beauveria bassiana (strain ARSEF 2860) (White muscardine disease fungus), this protein is Nonribosomal peptide synthetase SIDC.